The chain runs to 881 residues: Regulatory protein GAL4 (881 aa).

Residues cysteine 11, cysteine 14, cysteine 21, cysteine 28, cysteine 31, and cysteine 38 each coordinate Zn(2+). The zn(2)-C6 fungal-type DNA-binding region spans 11–38; the sequence is CDICRLKKLKCSKEKPKCAKCLKNNWEC. At tyrosine 694 the chain carries Phosphotyrosine. Phosphoserine is present on residues serine 696, serine 699, serine 703, and serine 712. The disordered stretch occupies residues 723–743; that stretch reads RPPSRNSPVTIPRSTPSHRSV. The 9aaTAD motif lies at 862–870; that stretch reads DDVYNYLFD.

In terms of assembly, binds DNA as a homodimer. Interacts directly with the mediator subunits GAL11/MED15 and SRB4/MED17. Post-translationally, association between GAL11 and GAL4 may serve to expedite phosphorylation of GAL4.

The protein resides in the nucleus. This protein is a positive regulator for the gene expression of the galactose-induced genes such as GAL1, GAL2, GAL7, GAL10, and MEL1 which code for the enzymes used to convert galactose to glucose. It recognizes a 17 base pair sequence in (5'-CGGRNNRCYNYNCNCCG-3') the upstream activating sequence (UAS-G) of these genes. The chain is Regulatory protein GAL4 (GAL4) from Saccharomyces cerevisiae (strain ATCC 204508 / S288c) (Baker's yeast).